The following is a 367-amino-acid chain: Anhydro-N-acetylmuramic acid kinase (367 aa).

Position 13-20 (13-20 (GTSMDGAD)) interacts with ATP.

Belongs to the anhydro-N-acetylmuramic acid kinase family.

It catalyses the reaction 1,6-anhydro-N-acetyl-beta-muramate + ATP + H2O = N-acetyl-D-muramate 6-phosphate + ADP + H(+). It participates in amino-sugar metabolism; 1,6-anhydro-N-acetylmuramate degradation. Its pathway is cell wall biogenesis; peptidoglycan recycling. Catalyzes the specific phosphorylation of 1,6-anhydro-N-acetylmuramic acid (anhMurNAc) with the simultaneous cleavage of the 1,6-anhydro ring, generating MurNAc-6-P. Is required for the utilization of anhMurNAc either imported from the medium or derived from its own cell wall murein, and thus plays a role in cell wall recycling. This is Anhydro-N-acetylmuramic acid kinase from Neisseria gonorrhoeae (strain ATCC 700825 / FA 1090).